We begin with the raw amino-acid sequence, 812 residues long: Xaa-Pro dipeptidyl-peptidase (812 aa).

Residues S372, D492, and H523 each act as charge relay system in the active site.

This sequence belongs to the peptidase S15 family. Homodimer.

The protein resides in the cytoplasm. The catalysed reaction is Hydrolyzes Xaa-Pro-|- bonds to release unblocked, N-terminal dipeptides from substrates including Ala-Pro-|-p-nitroanilide and (sequentially) Tyr-Pro-|-Phe-Pro-|-Gly-Pro-|-Ile.. In terms of biological role, removes N-terminal dipeptides sequentially from polypeptides having unsubstituted N-termini provided that the penultimate residue is proline. The chain is Xaa-Pro dipeptidyl-peptidase from Pediococcus pentosaceus (strain ATCC 25745 / CCUG 21536 / LMG 10740 / 183-1w).